The primary structure comprises 430 residues: Adenylosuccinate synthetase (430 aa).

Residues 12–18 (GDEGKGK) and 40–42 (GHT) contribute to the GTP site. Asp-13 (proton acceptor) is an active-site residue. Mg(2+) contacts are provided by Asp-13 and Gly-40. Residues 13-16 (DEGK), 38-41 (NAGH), Thr-128, Arg-142, Gln-223, Thr-238, and Arg-302 each bind IMP. His-41 (proton donor) is an active-site residue. 298–304 (TTTGRPR) is a substrate binding site. Residues Arg-304, 330 to 332 (SID), and 412 to 414 (SVG) contribute to the GTP site.

The protein belongs to the adenylosuccinate synthetase family. As to quaternary structure, homodimer. The cofactor is Mg(2+).

The protein localises to the cytoplasm. The catalysed reaction is IMP + L-aspartate + GTP = N(6)-(1,2-dicarboxyethyl)-AMP + GDP + phosphate + 2 H(+). Its pathway is purine metabolism; AMP biosynthesis via de novo pathway; AMP from IMP: step 1/2. In terms of biological role, plays an important role in the de novo pathway of purine nucleotide biosynthesis. Catalyzes the first committed step in the biosynthesis of AMP from IMP. The sequence is that of Adenylosuccinate synthetase from Streptococcus equi subsp. equi (strain 4047).